The sequence spans 122 residues: S-adenosylmethionine decarboxylase proenzyme (122 aa).

The active-site Schiff-base intermediate with substrate; via pyruvic acid is Ser-63. Ser-63 is subject to Pyruvic acid (Ser); by autocatalysis. The active-site Proton acceptor; for processing activity is His-68. Cys-83 functions as the Proton donor; for catalytic activity in the catalytic mechanism.

It belongs to the prokaryotic AdoMetDC family. Type 1 subfamily. As to quaternary structure, heterotetramer of two alpha and two beta chains arranged as a dimer of alpha/beta heterodimers. Pyruvate is required as a cofactor. Post-translationally, is synthesized initially as an inactive proenzyme. Formation of the active enzyme involves a self-maturation process in which the active site pyruvoyl group is generated from an internal serine residue via an autocatalytic post-translational modification. Two non-identical subunits are generated from the proenzyme in this reaction, and the pyruvate is formed at the N-terminus of the alpha chain, which is derived from the carboxyl end of the proenzyme. The post-translation cleavage follows an unusual pathway, termed non-hydrolytic serinolysis, in which the side chain hydroxyl group of the serine supplies its oxygen atom to form the C-terminus of the beta chain, while the remainder of the serine residue undergoes an oxidative deamination to produce ammonia and the pyruvoyl group blocking the N-terminus of the alpha chain.

The catalysed reaction is S-adenosyl-L-methionine + H(+) = S-adenosyl 3-(methylsulfanyl)propylamine + CO2. It participates in amine and polyamine biosynthesis; S-adenosylmethioninamine biosynthesis; S-adenosylmethioninamine from S-adenosyl-L-methionine: step 1/1. In terms of biological role, catalyzes the decarboxylation of S-adenosylmethionine to S-adenosylmethioninamine (dcAdoMet), the propylamine donor required for the synthesis of the polyamines spermine and spermidine from the diamine putrescine. The sequence is that of S-adenosylmethionine decarboxylase proenzyme from Methanococcus maripaludis (strain C5 / ATCC BAA-1333).